We begin with the raw amino-acid sequence, 126 residues long: NADH-quinone oxidoreductase subunit A (126 aa).

Transmembrane regions (helical) follow at residues 14–34, 66–86, and 96–116; these read FLYF…TSWF, FYLI…LYAW, and IGFV…FYLV.

This sequence belongs to the complex I subunit 3 family. In terms of assembly, NDH-1 is composed of 13 different subunits. Subunits NuoA, H, J, K, L, M, N constitute the membrane sector of the complex.

It is found in the cell membrane. It catalyses the reaction a quinone + NADH + 5 H(+)(in) = a quinol + NAD(+) + 4 H(+)(out). In terms of biological role, NDH-1 shuttles electrons from NADH, via FMN and iron-sulfur (Fe-S) centers, to quinones in the respiratory chain. The immediate electron acceptor for the enzyme in this species is believed to be ubiquinone. Couples the redox reaction to proton translocation (for every two electrons transferred, four hydrogen ions are translocated across the cytoplasmic membrane), and thus conserves the redox energy in a proton gradient. The chain is NADH-quinone oxidoreductase subunit A from Buchnera aphidicola subsp. Schizaphis graminum (strain Sg).